The chain runs to 87 residues: Small ribosomal subunit protein uS17 (87 aa).

Belongs to the universal ribosomal protein uS17 family. In terms of assembly, part of the 30S ribosomal subunit.

One of the primary rRNA binding proteins, it binds specifically to the 5'-end of 16S ribosomal RNA. The polypeptide is Small ribosomal subunit protein uS17 (Geobacillus sp. (strain WCH70)).